A 98-amino-acid chain; its full sequence is Late cornified envelope-like proline-rich protein 1 (98 aa).

Residues 1–26 (MSSDDKSKSNDPKTEPKNCDPKCEQK) form a disordered region.

This sequence belongs to the cornifin (SPRR) family.

This is Late cornified envelope-like proline-rich protein 1 (LELP1) from Homo sapiens (Human).